Reading from the N-terminus, the 313-residue chain is Ribosomal RNA small subunit methyltransferase H (313 aa).

S-adenosyl-L-methionine is bound by residues 35-37, Asp-55, Phe-79, Asp-101, and Gln-108; that span reads GGH.

Belongs to the methyltransferase superfamily. RsmH family.

It localises to the cytoplasm. The catalysed reaction is cytidine(1402) in 16S rRNA + S-adenosyl-L-methionine = N(4)-methylcytidine(1402) in 16S rRNA + S-adenosyl-L-homocysteine + H(+). In terms of biological role, specifically methylates the N4 position of cytidine in position 1402 (C1402) of 16S rRNA. The polypeptide is Ribosomal RNA small subunit methyltransferase H (Escherichia coli O127:H6 (strain E2348/69 / EPEC)).